Reading from the N-terminus, the 147-residue chain is Hemoglobin subunit beta (147 aa).

Val-2 is subject to N-acetylvaline. A Globin domain is found at 3–147 (HLTGDEKAAV…VANALAHKYH (145 aa)). Thr-13 carries the phosphothreonine modification. Ser-45 carries the phosphoserine modification. Lys-60 is subject to N6-acetyllysine. His-64 is a heme b binding site. An N6-acetyllysine modification is found at Lys-83. His-93 lines the heme b pocket. At Cys-94 the chain carries S-nitrosocysteine. An N6-acetyllysine modification is found at Lys-145.

The protein belongs to the globin family. As to quaternary structure, heterotetramer of two alpha chains and two beta chains. Red blood cells.

Its function is as follows. Involved in oxygen transport from the lung to the various peripheral tissues. The sequence is that of Hemoglobin subunit beta (HBB) from Alouatta belzebul (Red-handed howler monkey).